Reading from the N-terminus, the 596-residue chain is Beta-fructofuranosidase, insoluble isoenzyme 6 (596 aa).

Residues 1–25 form the signal peptide; that stretch reads MALAGLPLSVFAIAVHFCLVFSSSS. Residues 49–52, Gln68, and Trp76 each bind substrate; that span reads WQND. Asp52 is an active-site residue. The N-linked (GlcNAc...) asparagine glycan is linked to Asn80. Substrate-binding positions include 113-114, 177-178, and Glu232; these read AS and RD. Asn335 carries N-linked (GlcNAc...) asparagine glycosylation. Cys436 and Cys482 are disulfide-bonded. Asn556 carries an N-linked (GlcNAc...) asparagine glycan.

This sequence belongs to the glycosyl hydrolase 32 family. Expressed in roots. Weakly expressed in flowers.

The protein resides in the secreted. The protein localises to the extracellular space. Its subcellular location is the apoplast. It is found in the cell wall. It carries out the reaction Hydrolysis of terminal non-reducing beta-D-fructofuranoside residues in beta-D-fructofuranosides.. This Oryza sativa subsp. japonica (Rice) protein is Beta-fructofuranosidase, insoluble isoenzyme 6 (CIN6).